A 154-amino-acid polypeptide reads, in one-letter code: tRNA (cytidine(34)-2'-O)-methyltransferase (154 aa).

The S-adenosyl-L-methionine site is built by L78, G100, L122, and S130.

This sequence belongs to the class IV-like SAM-binding methyltransferase superfamily. RNA methyltransferase TrmH family. TrmL subfamily. As to quaternary structure, homodimer.

It is found in the cytoplasm. The enzyme catalyses cytidine(34) in tRNA + S-adenosyl-L-methionine = 2'-O-methylcytidine(34) in tRNA + S-adenosyl-L-homocysteine + H(+). It catalyses the reaction 5-carboxymethylaminomethyluridine(34) in tRNA(Leu) + S-adenosyl-L-methionine = 5-carboxymethylaminomethyl-2'-O-methyluridine(34) in tRNA(Leu) + S-adenosyl-L-homocysteine + H(+). Its function is as follows. Methylates the ribose at the nucleotide 34 wobble position in the two leucyl isoacceptors tRNA(Leu)(CmAA) and tRNA(Leu)(cmnm5UmAA). Catalyzes the methyl transfer from S-adenosyl-L-methionine to the 2'-OH of the wobble nucleotide. This Methylovorus glucosotrophus (strain SIP3-4) protein is tRNA (cytidine(34)-2'-O)-methyltransferase.